Here is a 551-residue protein sequence, read N- to C-terminus: Probable terpene synthase 8 (551 aa).

Mg(2+)-binding residues include Asp-307, Asp-311, and Glu-457. Residues 307-311 (DDTYD) carry the DDXXD motif motif.

Belongs to the terpene synthase family. Requires Mg(2+) as cofactor.

In terms of biological role, probable sesquiterpene synthase. The protein is Probable terpene synthase 8 (TPS8) of Ricinus communis (Castor bean).